Here is a 375-residue protein sequence, read N- to C-terminus: Queuine tRNA-ribosyltransferase (375 aa).

Residue D89 is the Proton acceptor of the active site. Residues 89–93 (DSGGF), D143, Q187, and G214 each bind substrate. An RNA binding region spans residues 245–251 (GVGKPED). D264 serves as the catalytic Nucleophile. The segment at 269-273 (TRNAR) is RNA binding; important for wobble base 34 recognition. Residues C302, C304, C307, and H333 each coordinate Zn(2+).

This sequence belongs to the queuine tRNA-ribosyltransferase family. As to quaternary structure, homodimer. Within each dimer, one monomer is responsible for RNA recognition and catalysis, while the other monomer binds to the replacement base PreQ1. Requires Zn(2+) as cofactor.

The catalysed reaction is 7-aminomethyl-7-carbaguanine + guanosine(34) in tRNA = 7-aminomethyl-7-carbaguanosine(34) in tRNA + guanine. It functions in the pathway tRNA modification; tRNA-queuosine biosynthesis. Its function is as follows. Catalyzes the base-exchange of a guanine (G) residue with the queuine precursor 7-aminomethyl-7-deazaguanine (PreQ1) at position 34 (anticodon wobble position) in tRNAs with GU(N) anticodons (tRNA-Asp, -Asn, -His and -Tyr). Catalysis occurs through a double-displacement mechanism. The nucleophile active site attacks the C1' of nucleotide 34 to detach the guanine base from the RNA, forming a covalent enzyme-RNA intermediate. The proton acceptor active site deprotonates the incoming PreQ1, allowing a nucleophilic attack on the C1' of the ribose to form the product. After dissociation, two additional enzymatic reactions on the tRNA convert PreQ1 to queuine (Q), resulting in the hypermodified nucleoside queuosine (7-(((4,5-cis-dihydroxy-2-cyclopenten-1-yl)amino)methyl)-7-deazaguanosine). The polypeptide is Queuine tRNA-ribosyltransferase (Salmonella typhi).